The sequence spans 268 residues: Ubiquinone biosynthesis protein COQ4 homolog, mitochondrial (268 aa).

Residues His-171, Asp-172, His-175, and Glu-187 each coordinate Zn(2+).

The protein belongs to the COQ4 family. As to quaternary structure, component of a multi-subunit COQ enzyme complex. It depends on Zn(2+) as a cofactor.

It is found in the mitochondrion inner membrane. The catalysed reaction is a 4-hydroxy-3-methoxy-5-(all-trans-polyprenyl)benzoate + H(+) = a 2-methoxy-6-(all-trans-polyprenyl)phenol + CO2. The protein operates within cofactor biosynthesis; ubiquinone biosynthesis. Lyase that catalyzes the C1-decarboxylation of 4-hydroxy-3-methoxy-5-(all-trans-polyprenyl)benzoic acid into 2-methoxy-6-(all-trans-polyprenyl)phenol during ubiquinone biosynthesis. The chain is Ubiquinone biosynthesis protein COQ4 homolog, mitochondrial from Drosophila yakuba (Fruit fly).